Reading from the N-terminus, the 558-residue chain is T-complex protein 1 subunit eta (558 aa).

A disordered region spans residues 524 to 558 (VRNPKSEQPKAPPGGLRRGGPQGMAGLAKNARLGK).

This sequence belongs to the TCP-1 chaperonin family. As to quaternary structure, heterooligomeric complex of about 850 to 900 kDa that forms two stacked rings, 12 to 16 nm in diameter.

It is found in the cytoplasm. Its function is as follows. Molecular chaperone; assists the folding of proteins upon ATP hydrolysis. Known to play a role, in vitro, in the folding of actin and tubulin. In Tetrahymena pyriformis, this protein is T-complex protein 1 subunit eta.